The primary structure comprises 163 residues: I-Kappa-B like protein N3 (163 aa).

ANK repeat units lie at residues 62–95 (LGDT…NLNT) and 100–130 (NGDT…NLQT).

It belongs to the polydnaviridae I-Kappa-B like protein family.

In terms of biological role, suppresses the host immune response through NF-kappa-B inactivation. Possesses ankyrin repeat domains required for NF-kappa-B binding but lacks the regulatory regions required for dissociation from NF-kappa-B and degradation. Therefore, prevents host NF-kappa-B release and subsequent activation. The protein is I-Kappa-B like protein N3 (N6) of Microplitis demolitor (Parasitoid wasp).